We begin with the raw amino-acid sequence, 107 residues long: Virulence factor PGA16 (107 aa).

The first 18 residues, 1–18, serve as a signal peptide directing secretion; the sequence is MRVFQIVYILIISNLIYA. The interval 26 to 56 is disordered; the sequence is SHHHKNDNNIADNTNNNNNNNNNNNNNNITN. A compositionally biased stretch (low complexity) spans 33–56; it reads NNIADNTNNNNNNNNNNNNNNITN. N-linked (GlcNAc...) asparagine glycans are attached at residues N53 and N56. G76 carries GPI-anchor amidated glycine lipidation. The propeptide at 77 to 107 is removed in mature form; it reads VAAMGGILGQNGWFYGDAGLMAAIFGAMLLL.

It is found in the cell membrane. Functionally, cell surface GPI-anchored protein required for virulence. Mediates hyphal ramification which is important for the interaction with host cells. The polypeptide is Virulence factor PGA16 (PGA16) (Candida albicans (strain SC5314 / ATCC MYA-2876) (Yeast)).